A 443-amino-acid chain; its full sequence is 23S rRNA (uracil(1939)-C(5))-methyltransferase RlmD (443 aa).

The 63-residue stretch at 4 to 66 (QNRFDRTSFQ…RHFDEARVVE (63 aa)) folds into the TRAM domain. [4Fe-4S] cluster contacts are provided by Cys-79, Cys-85, Cys-88, and Cys-167. The S-adenosyl-L-methionine site is built by Gln-275, Phe-304, Asn-309, Glu-325, Asp-352, and Asp-373. Cys-399 functions as the Nucleophile in the catalytic mechanism.

This sequence belongs to the class I-like SAM-binding methyltransferase superfamily. RNA M5U methyltransferase family. RlmD subfamily.

The catalysed reaction is uridine(1939) in 23S rRNA + S-adenosyl-L-methionine = 5-methyluridine(1939) in 23S rRNA + S-adenosyl-L-homocysteine + H(+). In terms of biological role, catalyzes the formation of 5-methyl-uridine at position 1939 (m5U1939) in 23S rRNA. The chain is 23S rRNA (uracil(1939)-C(5))-methyltransferase RlmD from Xylella fastidiosa (strain 9a5c).